The chain runs to 449 residues: uncharacterized protein (449 aa).

The protein resides in the mitochondrion. This is an uncharacterized protein from Podospora anserina (strain S / ATCC MYA-4624 / DSM 980 / FGSC 10383) (Pleurage anserina).